Here is a 353-residue protein sequence, read N- to C-terminus: Protein RecA (353 aa).

67-74 (GPESSGKT) serves as a coordination point for ATP.

This sequence belongs to the RecA family.

The protein resides in the cytoplasm. Its function is as follows. Can catalyze the hydrolysis of ATP in the presence of single-stranded DNA, the ATP-dependent uptake of single-stranded DNA by duplex DNA, and the ATP-dependent hybridization of homologous single-stranded DNAs. It interacts with LexA causing its activation and leading to its autocatalytic cleavage. In Salmonella agona (strain SL483), this protein is Protein RecA.